A 733-amino-acid chain; its full sequence is Cyclic nucleotide-gated channel (733 aa).

Disordered regions lie at residues 1 to 33 and 67 to 95; these read MSTAEPAPDPTNPSTSGLAPTTNGIGSPPPTAS and PNGNSNAVQPAATGGQPASSDGGSAIEVP. Over 1 to 125 the chain is Cytoplasmic; it reads MSTAEPAPDP…PSTDNFYYWT (125 aa). The segment covering 12–25 has biased composition (polar residues); that stretch reads NPSTSGLAPTTNGI. The chain crosses the membrane as a helical span at residues 126–148; it reads CVVTVAYIYNLLFVIARQVFNDL. Over 149-197 the chain is Extracellular; it reads IGPSSQSLCRFYNGTLNSTTQVECTYNMLTNMKEMPTYSQYPDLGWSKY. A helical transmembrane segment spans residues 198 to 217; that stretch reads WHFRMLWVFFDLLMDCVYLI. Residues 218–251 lie on the Cytoplasmic side of the membrane; the sequence is DTFLNYRMGYMDQGLVVREAEKVTKAYWQSKQYR. Residues 252–265 traverse the membrane as a helical segment; sequence IDGISLIPLDYILG. The Extracellular segment spans residues 266–276; that stretch reads WPIPYINWRGL. The chain crosses the membrane as a helical span at residues 277–287; the sequence is PILRLNRLIRY. Residues 288-308 lie on the Cytoplasmic side of the membrane; sequence KRVRNCLERTETRSSMPNAFR. A helical transmembrane segment spans residues 309 to 331; that stretch reads VVVVVWYIVIIIHWNACLYFWIS. Residues 332 to 362 lie on the Extracellular side of the membrane; the sequence is EWIGLGTDAWVYGHLNKQSLPDDITDTLLRR. The next 2 helical transmembrane spans lie at 363–385 and 386–411; these read YVYSFYWSTLILTTIGEVPSPVR and NIEYAFVTLDLMCGVLIFATIVGNVG. The selectivity filter stretch occupies residues 376 to 379; the sequence is TIGE. Glutamate 379 contacts Na(+). Residues 412–733 are Cytoplasmic-facing; sequence SMISNMSAAR…TGTESESLLK (322 aa). The tract at residues 419–496 is C-linker; that stretch reads AARTEFQNKM…TLRKVRIFQD (78 aa). The tract at residues 493–607 is cyclic nucleotide-binding domain; the sequence is IFQDCEAGLL…ALREYPDARK (115 aa). Glycine 559 serves as a coordination point for 3',5'-cyclic GMP. A 3',5'-cyclic AMP-binding site is contributed by glutamate 560. Residues serine 562, arginine 575, threonine 576, lysine 619, and aspartate 620 each contribute to the 3',5'-cyclic GMP site. A 3',5'-cyclic AMP-binding site is contributed by arginine 575. The interval 694-733 is disordered; that stretch reads SIDGGDISTDGVDERVRPPRLRQTKTIDLPTGTESESLLK.

It belongs to the cyclic nucleotide-gated cation channel (TC 1.A.1.5) family. As to quaternary structure, homotetramer. Expressed at the sensory endings of thermosensory, gustatory, and olfactory neurons.

It is found in the cell membrane. It localises to the cell projection. The protein resides in the cilium. It catalyses the reaction Ca(2+)(in) = Ca(2+)(out). The enzyme catalyses Na(+)(in) = Na(+)(out). It carries out the reaction K(+)(in) = K(+)(out). Pore-forming subunit of the cyclic nucleotide-gated channel. Required for normal thermosensation and chemosensation sensory behavior. Required, downstream of receptor-type guanylate cyclase gcy-9, for CO2-mediated responses in BAG neurons. Required, downstream of receptor-type guanylate cyclase gcy-14, for alkaline pH-mediated responses in ASE-left (ASEL) neurons. Involved in the development of ASJ sensory neuron axon during late larval stages and in the maintenance of normal axon morphology in the adult. Regulates dauer formation. Required for the calcium flux to the cytoplasm in the ASJ sensory neurons upon the onset and removal of a nitric oxide (NO) stimulus, thereby promoting the ASJ-mediated behavioral avoidance response to NO-producing organisms like P.aeruginosa. In ASI and ASJ sensory neurons, controls behavioral response to P.aeruginosa by up-regulating the transcription of daf-7, a member of the TGF-beta family. In AWB and AWC sensory neurons, mediates the recognition of food odors which subsequently allows for the detection of preferred food sources. In AWC neurons, acts to promote expression of srsx-3, a member of the GPCR family. Binding to cGMP results in conformational changes at the hydrophobic gate that converts the protein from an inactive closed state to an active open state. The chain is Cyclic nucleotide-gated channel (tax-4) from Caenorhabditis elegans.